Consider the following 290-residue polypeptide: Dual-specificity RNA pseudouridine synthase RluF (290 aa).

The S4 RNA-binding domain maps to 7 to 74 (VRLNKYISES…EDLVLIALNK (68 aa)). 2 interaction with RNA regions span residues 105-108 (RLDK) and 187-190 (RQIR). Asp107 (nucleophile) is an active-site residue. The segment at 241 to 290 (SEAKPKAKAKPKTVGIKRPVVKMEKTAEKGGRPASNGKRFTSPGRKKKGR) is disordered. Positions 261 to 271 (VKMEKTAEKGG) are enriched in basic and acidic residues.

The protein belongs to the pseudouridine synthase RsuA family. As to quaternary structure, monomer.

The catalysed reaction is uridine(2604) in 23S rRNA = pseudouridine(2604) in 23S rRNA. It catalyses the reaction uridine(35) in tRNA(Tyr) = pseudouridine(35) in tRNA(Tyr). Functionally, dual specificity enzyme that catalyzes the synthesis of pseudouridine from uracil-2604 in 23S ribosomal RNA and from uracil-35 in the anticodon of tRNA(Tyr). This chain is Dual-specificity RNA pseudouridine synthase RluF (rluF), found in Escherichia coli O6:H1 (strain CFT073 / ATCC 700928 / UPEC).